A 204-amino-acid chain; its full sequence is Guanylate kinase (204 aa).

Positions 5 to 184 constitute a Guanylate kinase-like domain; it reads GLLIVLSGPS…ACDKIKAIVL (180 aa). 12 to 19 provides a ligand contact to ATP; the sequence is GPSGVGKG.

This sequence belongs to the guanylate kinase family.

It localises to the cytoplasm. The catalysed reaction is GMP + ATP = GDP + ADP. Its function is as follows. Essential for recycling GMP and indirectly, cGMP. In Bacillus subtilis (strain 168), this protein is Guanylate kinase (gmk).